The primary structure comprises 759 residues: Inhibitor of nuclear factor kappa-B kinase subunit alpha (759 aa).

The interval 1 to 20 (MERGAERGPPPAPGGVALRG) is disordered. Residues 29-316 (WEMRDRLGTG…PETNSPKCFL (288 aa)) enclose the Protein kinase domain. Residues 35 to 43 (LGTGGFGNV) and K58 contribute to the ATP site. The Proton acceptor role is filled by D158. Positions 469–490 (LLRYNANLIKMKNNMVSASQQL) are leucine-zipper. Residues 691–703 (TPAATWVPQSSSE) show a composition bias toward polar residues. A disordered region spans residues 691–715 (TPAATWVPQSSSEYAPHPLSSMATP). The NEMO-binding stretch occupies residues 753–758 (FDWSWL).

Belongs to the protein kinase superfamily. Ser/Thr protein kinase family. I-kappa-B kinase subfamily.

It localises to the cytoplasm. The protein localises to the nucleus. It carries out the reaction L-seryl-[I-kappa-B protein] + ATP = O-phospho-L-seryl-[I-kappa-B protein] + ADP + H(+). Its activity is regulated as follows. Activated when phosphorylated and inactivated when dephosphorylated. Its function is as follows. Phosphorylates inhibitors of NF-kappa-B thus leading to the dissociation of the inhibitor/NF-kappa-B complex and ultimately the degradation of the inhibitor. Phosphorylates 'Ser-10' of histone H3 at NF-kappa-B-regulated promoters during inflammatory responses triggered by cytokines. In Gallus gallus (Chicken), this protein is Inhibitor of nuclear factor kappa-B kinase subunit alpha (CHUK).